The primary structure comprises 246 residues: Homeobox protein Hox-B4a (246 aa).

The interval 23–125 is disordered; that stretch reads YSQSDYLPSH…SQNTSTVSSR (103 aa). 2 stretches are compositionally biased toward polar residues: residues 39–48 and 112–123; these read AQRQDPSFQH and QTPTSQNTSTVS. An Antp-type hexapeptide motif is present at residues 130 to 135; it reads VYPWMK. The segment at residues 151–210 is a DNA-binding region (homeobox); sequence PKRSRTAYTRQQVLELEKEFHYNRYLTRRRRVEIAHTLCLSERQIKIWFQNRRMKWKKDH. A disordered region spans residues 210 to 246; it reads HKLPNTKIRSNSASTNSSGCPTLCSNQSRASGPPPSL. Residues 216–239 show a composition bias toward polar residues; that stretch reads KIRSNSASTNSSGCPTLCSNQSRA.

Belongs to the Antp homeobox family. Deformed subfamily.

It localises to the nucleus. Its function is as follows. Sequence-specific transcription factor which is part of a developmental regulatory system that provides cells with specific positional identities on the anterior-posterior axis. The polypeptide is Homeobox protein Hox-B4a (hoxb4a) (Danio rerio (Zebrafish)).